We begin with the raw amino-acid sequence, 302 residues long: Mediator of RNA polymerase II transcription subunit 4 (302 aa).

A coiled-coil region spans residues 98 to 145 (QLHANVEKIIAINDDLKSKIEELDRHRRLGENIKELEAESSNLDNTSK). The interval 239-302 (GTTEEEKIQE…LFDSEDEFSD (64 aa)) is disordered. A compositionally biased stretch (basic and acidic residues) spans 242 to 265 (EEEKIQEKKDEQVKKADKQQDTGI). Positions 268–278 (GSFGDYGSSSS) are enriched in low complexity. Over residues 292–302 (DLFDSEDEFSD) the composition is skewed to acidic residues.

This sequence belongs to the Mediator complex subunit 4 family. In terms of assembly, component of the Mediator complex.

The protein localises to the nucleus. Functionally, component of the Mediator complex, a coactivator involved in the regulated transcription of nearly all RNA polymerase II-dependent genes. Mediator functions as a bridge to convey information from gene-specific regulatory proteins to the basal RNA polymerase II transcription machinery. Mediator is recruited to promoters by direct interactions with regulatory proteins and serves as a scaffold for the assembly of a functional preinitiation complex with RNA polymerase II and the general transcription factors. This is Mediator of RNA polymerase II transcription subunit 4 (MED4) from Scheffersomyces stipitis (strain ATCC 58785 / CBS 6054 / NBRC 10063 / NRRL Y-11545) (Yeast).